Reading from the N-terminus, the 143-residue chain is Phosphoprotein 32 (143 aa).

Residues 1 to 14 (MESSNINALQQPSS) are compositionally biased toward polar residues. Residues 1–32 (MESSNINALQQPSSIAHHPSKQCASSLNETVK) form a disordered region.

The protein belongs to the varicellovirus ORF32 protein family. Phosphorylated by ORF47 protein.

This chain is Phosphoprotein 32, found in Homo sapiens (Human).